The chain runs to 491 residues: Putative pentatricopeptide repeat-containing protein At1g02420 (491 aa).

8 PPR repeats span residues 179–209 (DTAC…LKHQ), 210–244 (FQPD…GLKP), 245–279 (DVVT…EETP), 280–314 (DVIT…GCYP), 315–349 (DVAA…GLSP), 350–384 (NATT…ECLP), 385–419 (NTQS…GFGS), and 420–454 (YSLV…GHRP).

Belongs to the PPR family. P subfamily.

This Arabidopsis thaliana (Mouse-ear cress) protein is Putative pentatricopeptide repeat-containing protein At1g02420.